The sequence spans 279 residues: MIQTFNELGALRGQIAEWKREGLRVALVPTMGNLHGGHHSLVTLARQYADKVVASIFVNPTQFGPNEDFSRYPRTPEADVAGLEQAGCDAVWLPSVEAMYPLGVDKTTRMHAPGVSEVLEGASRPGHFDGVCTVVARLFLQVQPDAAVFGRKDYQQLAVIKQMVAELSFPIQIVGADIVRDDDGLAKSSRNQYLSAEQRPVATSIHRTLLGMREGYVAGQSRAQIEADATAALQADGFQVDYAVLRTPELAEPTFDGGGRVALIAARLGTTRLIDNLEF.

ATP is bound at residue 31–38; that stretch reads MGNLHGGH. Catalysis depends on His-38, which acts as the Proton donor. Gln-62 contacts (R)-pantoate. Residue Gln-62 coordinates beta-alanine. 150-153 serves as a coordination point for ATP; sequence GRKD. Gln-156 serves as a coordination point for (R)-pantoate. Residues Val-179 and 187–190 each bind ATP; that span reads KSSR.

Belongs to the pantothenate synthetase family. In terms of assembly, homodimer.

It is found in the cytoplasm. It catalyses the reaction (R)-pantoate + beta-alanine + ATP = (R)-pantothenate + AMP + diphosphate + H(+). Its pathway is cofactor biosynthesis; (R)-pantothenate biosynthesis; (R)-pantothenate from (R)-pantoate and beta-alanine: step 1/1. Catalyzes the condensation of pantoate with beta-alanine in an ATP-dependent reaction via a pantoyl-adenylate intermediate. The polypeptide is Pantothenate synthetase (Stenotrophomonas maltophilia (strain R551-3)).